Reading from the N-terminus, the 1102-residue chain is Coiled-coil domain-containing protein AGAP005037 (1102 aa).

Positions 1–11 (MLIRWKSKDKS) are enriched in basic and acidic residues. Disordered stretches follow at residues 1–69 (MLIR…HTLG) and 295–318 (HKSK…RGMY). The segment covering 12–21 (SSSTSSSSST) has biased composition (low complexity). The segment covering 50-65 (IDDRRRSARSREDPRR) has biased composition (basic and acidic residues). A coiled-coil region spans residues 405 to 430 (HRIRVEHMERQLANLTGLVQKALTQN). 2 disordered regions span residues 450 to 475 (RNAE…STCH) and 489 to 539 (DIQG…PLVM). Coiled coils occupy residues 554–579 (EVYN…LRRL) and 614–654 (DKER…EVIN). 3 disordered regions span residues 745–774 (LPIP…PSPR), 832–958 (TKIS…CSDN), and 1031–1087 (LCGG…TLPP). A compositionally biased stretch (polar residues) spans 832–849 (TKISQSQLYPSEPVSSNV). The span at 867-881 (PPQPTRPTTGKPPVP) shows a compositional bias: pro residues. Residues 904–918 (TSSRSPLASPTSPHV) show a composition bias toward low complexity. The span at 936 to 958 (DCEQQQRTSEGTDSGSESVCSDN) shows a compositional bias: polar residues.

The chain is Coiled-coil domain-containing protein AGAP005037 from Anopheles gambiae (African malaria mosquito).